Here is a 345-residue protein sequence, read N- to C-terminus: Holliday junction branch migration complex subunit RuvB (345 aa).

Residues 1 to 182 form a large ATPase domain (RuvB-L) region; that stretch reads MDQRIIASSS…FGIVQRLEFY (182 aa). Residues I21, R22, G63, K66, T67, T68, 129–131, R172, Y182, and R219 contribute to the ATP site; that span reads EDF. T67 is a Mg(2+) binding site. Residues 183–253 form a small ATPAse domain (RuvB-S) region; the sequence is SPQELTRIVI…VAQAAMQMLK (71 aa). Positions 256 to 345 are head domain (RuvB-H); sequence PEGFDELDRR…PGIGEPGDLF (90 aa). DNA-binding residues include R292, R311, and R316.

The protein belongs to the RuvB family. Homohexamer. Forms an RuvA(8)-RuvB(12)-Holliday junction (HJ) complex. HJ DNA is sandwiched between 2 RuvA tetramers; dsDNA enters through RuvA and exits via RuvB. An RuvB hexamer assembles on each DNA strand where it exits the tetramer. Each RuvB hexamer is contacted by two RuvA subunits (via domain III) on 2 adjacent RuvB subunits; this complex drives branch migration. In the full resolvosome a probable DNA-RuvA(4)-RuvB(12)-RuvC(2) complex forms which resolves the HJ.

It is found in the cytoplasm. The catalysed reaction is ATP + H2O = ADP + phosphate + H(+). In terms of biological role, the RuvA-RuvB-RuvC complex processes Holliday junction (HJ) DNA during genetic recombination and DNA repair, while the RuvA-RuvB complex plays an important role in the rescue of blocked DNA replication forks via replication fork reversal (RFR). RuvA specifically binds to HJ cruciform DNA, conferring on it an open structure. The RuvB hexamer acts as an ATP-dependent pump, pulling dsDNA into and through the RuvAB complex. RuvB forms 2 homohexamers on either side of HJ DNA bound by 1 or 2 RuvA tetramers; 4 subunits per hexamer contact DNA at a time. Coordinated motions by a converter formed by DNA-disengaged RuvB subunits stimulates ATP hydrolysis and nucleotide exchange. Immobilization of the converter enables RuvB to convert the ATP-contained energy into a lever motion, pulling 2 nucleotides of DNA out of the RuvA tetramer per ATP hydrolyzed, thus driving DNA branch migration. The RuvB motors rotate together with the DNA substrate, which together with the progressing nucleotide cycle form the mechanistic basis for DNA recombination by continuous HJ branch migration. Branch migration allows RuvC to scan DNA until it finds its consensus sequence, where it cleaves and resolves cruciform DNA. The sequence is that of Holliday junction branch migration complex subunit RuvB from Xanthomonas oryzae pv. oryzae (strain MAFF 311018).